Reading from the N-terminus, the 254-residue chain is Activity-regulated cytoskeleton associated protein 1 (254 aa).

It belongs to the ARC/ARG3.1 family. In terms of assembly, homooligomer; homooligomerizes into virion-like capsids. Expressed in a specific population of brain neurons, named E347, that are necessary and sufficient for proper body fat storage.

The protein localises to the extracellular vesicle membrane. It is found in the synapse. In terms of biological role, master regulator of synaptic plasticity that self-assembles into virion-like capsids that encapsulate RNAs and mediate intercellular RNA transfer from motorneurons to muscles. Arc1 protein is released from motorneurons in extracellular vesicles that mediate the transfer of Arc1 mRNA into muscle cells, where Arc1 mRNA can undergo activity-dependent translation. Intercellular transfer od Arc1 mRNA is required for synaptic plasticity at the neuromuscular junction. May play a role in energy balance: required for regulation of body fat by a specific population of brain neurons, named E347, that are necessary and sufficient for proper body fat storage. This is Activity-regulated cytoskeleton associated protein 1 from Drosophila melanogaster (Fruit fly).